A 513-amino-acid polypeptide reads, in one-letter code: ATP synthase subunit alpha, mitochondrial (513 aa).

Residue 170-177 (GDRQTGKT) participates in ATP binding.

The protein belongs to the ATPase alpha/beta chains family. In terms of assembly, F-type ATPases have 2 components, CF(1) - the catalytic core - and CF(0) - the membrane proton channel. CF(1) has five subunits: alpha(3), beta(3), gamma(1), delta(1), epsilon(1). CF(0) has three main subunits: a, b and c.

It is found in the mitochondrion. Its subcellular location is the mitochondrion inner membrane. In terms of biological role, mitochondrial membrane ATP synthase (F(1)F(0) ATP synthase or Complex V) produces ATP from ADP in the presence of a proton gradient across the membrane which is generated by electron transport complexes of the respiratory chain. F-type ATPases consist of two structural domains, F(1) - containing the extramembraneous catalytic core, and F(0) - containing the membrane proton channel, linked together by a central stalk and a peripheral stalk. During catalysis, ATP synthesis in the catalytic domain of F(1) is coupled via a rotary mechanism of the central stalk subunits to proton translocation. Subunits alpha and beta form the catalytic core in F(1). Rotation of the central stalk against the surrounding alpha(3)beta(3) subunits leads to hydrolysis of ATP in three separate catalytic sites on the beta subunits. Subunit alpha does not bear the catalytic high-affinity ATP-binding sites. This chain is ATP synthase subunit alpha, mitochondrial (ATPA), found in Marchantia polymorpha (Common liverwort).